Here is a 289-residue protein sequence, read N- to C-terminus: tRNA pseudouridine synthase B (289 aa).

The Nucleophile role is filled by Asp38.

It belongs to the pseudouridine synthase TruB family. Type 1 subfamily.

The catalysed reaction is uridine(55) in tRNA = pseudouridine(55) in tRNA. Its function is as follows. Responsible for synthesis of pseudouridine from uracil-55 in the psi GC loop of transfer RNAs. The sequence is that of tRNA pseudouridine synthase B from Clostridium tetani (strain Massachusetts / E88).